The following is a 226-amino-acid chain: UPF0173 metal-dependent hydrolase Msed_2125 (226 aa).

Belongs to the UPF0173 family.

This Metallosphaera sedula (strain ATCC 51363 / DSM 5348 / JCM 9185 / NBRC 15509 / TH2) protein is UPF0173 metal-dependent hydrolase Msed_2125.